A 954-amino-acid polypeptide reads, in one-letter code: Glycine dehydrogenase (decarboxylating) (954 aa).

Lysine 704 carries the post-translational modification N6-(pyridoxal phosphate)lysine.

The protein belongs to the GcvP family. The glycine cleavage system is composed of four proteins: P, T, L and H. Pyridoxal 5'-phosphate is required as a cofactor.

It catalyses the reaction N(6)-[(R)-lipoyl]-L-lysyl-[glycine-cleavage complex H protein] + glycine + H(+) = N(6)-[(R)-S(8)-aminomethyldihydrolipoyl]-L-lysyl-[glycine-cleavage complex H protein] + CO2. Its function is as follows. The glycine cleavage system catalyzes the degradation of glycine. The P protein binds the alpha-amino group of glycine through its pyridoxal phosphate cofactor; CO(2) is released and the remaining methylamine moiety is then transferred to the lipoamide cofactor of the H protein. The polypeptide is Glycine dehydrogenase (decarboxylating) (Rhizobium etli (strain ATCC 51251 / DSM 11541 / JCM 21823 / NBRC 15573 / CFN 42)).